A 455-amino-acid polypeptide reads, in one-letter code: Serine--tRNA ligase (455 aa).

Thr252 to Glu254 lines the L-serine pocket. Residues Arg283–Glu285 and Val299 each bind ATP. Residue Glu306 participates in L-serine binding. Glu370–Ser373 serves as a coordination point for ATP. L-serine is bound at residue Thr406.

This sequence belongs to the class-II aminoacyl-tRNA synthetase family. Type-1 seryl-tRNA synthetase subfamily. As to quaternary structure, homodimer. The tRNA molecule binds across the dimer.

It localises to the cytoplasm. It carries out the reaction tRNA(Ser) + L-serine + ATP = L-seryl-tRNA(Ser) + AMP + diphosphate + H(+). The catalysed reaction is tRNA(Sec) + L-serine + ATP = L-seryl-tRNA(Sec) + AMP + diphosphate + H(+). Its pathway is aminoacyl-tRNA biosynthesis; selenocysteinyl-tRNA(Sec) biosynthesis; L-seryl-tRNA(Sec) from L-serine and tRNA(Sec): step 1/1. In terms of biological role, catalyzes the attachment of serine to tRNA(Ser). Is also able to aminoacylate tRNA(Sec) with serine, to form the misacylated tRNA L-seryl-tRNA(Sec), which will be further converted into selenocysteinyl-tRNA(Sec). The sequence is that of Serine--tRNA ligase from Thermococcus kodakarensis (strain ATCC BAA-918 / JCM 12380 / KOD1) (Pyrococcus kodakaraensis (strain KOD1)).